A 216-amino-acid chain; its full sequence is Ras-related protein RABE1d (216 aa).

Position 22 to 29 (22 to 29) interacts with GTP; it reads GDSGVGKS. An Effector region motif is present at residues 44–52; it reads FITTIGIDF. Residues 70-74, 128-131, and 159-160 contribute to the GTP site; these read DTAGQ, NKAD, and SA. Residues 196 to 216 are disordered; it reads TKQDTAASSSTAEKSACCSYV. Residues 200 to 216 are compositionally biased toward low complexity; sequence TAASSSTAEKSACCSYV. Residues cysteine 212 and cysteine 213 are each lipidated (S-geranylgeranyl cysteine).

Belongs to the small GTPase superfamily. Rab family. Interacts with PI5K2.

It localises to the golgi apparatus membrane. Its subcellular location is the cell membrane. Functionally, involved in membrane trafficking from the Golgi to the plasma membrane. The polypeptide is Ras-related protein RABE1d (RABE1D) (Arabidopsis thaliana (Mouse-ear cress)).